A 719-amino-acid chain; its full sequence is Putative RNA-binding protein involved in heterochromatin assembly (719 aa).

Positions 226-322 constitute an RRM domain; sequence KILYMNNLPP…NLANTKQPRV (97 aa). Residue Ser345 is modified to Phosphoserine. The segment at 355–384 adopts a RanBP2-type 1 zinc-finger fold; it reads RPGDWNCPSCGFSNFQRRTACFRCSFPAPS. A disordered region spans residues 389 to 415; sequence HTANSNNNVNSSRNNLNNRVNSGSSSN. Residues 392-415 show a composition bias toward low complexity; it reads NSNNNVNSSRNNLNNRVNSGSSSN. Phosphoserine is present on Ser455. Residues 511–561 are disordered; the sequence is NNNINGNGNGNGNNSNNNNNHNNNHNNNHHNGSINSNSNTNNNNNNNNGNN. The RanBP2-type 2 zinc-finger motif lies at 581 to 610; it reads RAGDWKCSTCTYHNFAKNVVCLRCGGPKSI. A compositionally biased stretch (polar residues) spans 622–649; it reads DSSTFGPASRTPSNNNISVNTNGGSNAG. Residues 622 to 661 are disordered; the sequence is DSSTFGPASRTPSNNNISVNTNGGSNAGRTDGNDNKGRDI. Residue Ser630 is modified to Phosphoserine. Basic and acidic residues predominate over residues 652-661; that stretch reads DGNDNKGRDI.

The protein resides in the chromosome. The protein localises to the nucleus. May play a role in chromatin organization. This Saccharomyces cerevisiae (strain ATCC 204508 / S288c) (Baker's yeast) protein is Putative RNA-binding protein involved in heterochromatin assembly.